The chain runs to 330 residues: Apolipoprotein E (330 aa).

A signal peptide spans 1 to 18; sequence MKVLWAALVVALLAGCWA. A disordered region spans residues 21-43; it reads EPESPLQGKPEPELEPELEPKRE. Tandem repeats lie at residues 96-117, 118-139, 140-161, 162-183, 184-205, 206-227, and 247-268. Residues 96 to 268 are 7 X 22 AA approximate tandem repeats; the sequence is TLMEETMKEI…HLDEVREQME (173 aa). Methionine sulfoxide is present on Met159. Position 163 is a phosphoserine (Ser163). Positions 174 to 184 are LDL and other lipoprotein receptors binding; it reads HMRKLRKRVLR. 178–181 serves as a coordination point for heparin; it reads LRKR. Positions 226–303 are lipid-binding and lipoprotein association; it reads HANLATQPLR…SWFEPLVEDM (78 aa). Position 242-249 (242-249) interacts with heparin; sequence GQQLRGRL. Positions 279–330 are homooligomerization; that stretch reads NQMRQQVEAFQARLKSWFEPLVEDMQRQWAGLVEKVQVAVGTSPTTPPLETK. The specificity for association with VLDL stretch occupies residues 291–303; it reads RLKSWFEPLVEDM.

It belongs to the apolipoprotein A1/A4/E family. In terms of assembly, homotetramer. May interact with ABCA1; functionally associated with ABCA1 in the biogenesis of HDLs. May interact with APP/A4 amyloid-beta peptide; the interaction is extremely stable in vitro but its physiological significance is unclear. May interact with MAPT. May interact with MAP2. In the cerebrospinal fluid, interacts with secreted SORL1. Interacts with PMEL; this allows the loading of PMEL luminal fragment on ILVs to induce fibril nucleation. In terms of processing, APOE exists as multiple glycosylated and sialylated glycoforms within cells and in plasma. The extent of glycosylation and sialylation are tissue and context specific. Post-translationally, glycated in plasma VLDL. Phosphorylated by FAM20C in the extracellular medium.

The protein resides in the secreted. Its subcellular location is the extracellular space. It localises to the extracellular matrix. It is found in the extracellular vesicle. The protein localises to the endosome. The protein resides in the multivesicular body. Its function is as follows. APOE is an apolipoprotein, a protein associating with lipid particles, that mainly functions in lipoprotein-mediated lipid transport between organs via the plasma and interstitial fluids. APOE is a core component of plasma lipoproteins and is involved in their production, conversion and clearance. Apolipoproteins are amphipathic molecules that interact both with lipids of the lipoprotein particle core and the aqueous environment of the plasma. As such, APOE associates with chylomicrons, chylomicron remnants, very low density lipoproteins (VLDL) and intermediate density lipoproteins (IDL) but shows a preferential binding to high-density lipoproteins (HDL). It also binds a wide range of cellular receptors including the LDL receptor/LDLR, the LDL receptor-related proteins LRP1, LRP2 and LRP8 and the very low-density lipoprotein receptor/VLDLR that mediate the cellular uptake of the APOE-containing lipoprotein particles. Finally, APOE also has a heparin-binding activity and binds heparan-sulfate proteoglycans on the surface of cells, a property that supports the capture and the receptor-mediated uptake of APOE-containing lipoproteins by cells. A main function of APOE is to mediate lipoprotein clearance through the uptake of chylomicrons, VLDLs, and HDLs by hepatocytes. APOE is also involved in the biosynthesis by the liver of VLDLs as well as their uptake by peripheral tissues ensuring the delivery of triglycerides and energy storage in muscle, heart and adipose tissues. By participating in the lipoprotein-mediated distribution of lipids among tissues, APOE plays a critical role in plasma and tissues lipid homeostasis. APOE is also involved in two steps of reverse cholesterol transport, the HDLs-mediated transport of cholesterol from peripheral tissues to the liver, and thereby plays an important role in cholesterol homeostasis. First, it is functionally associated with ABCA1 in the biogenesis of HDLs in tissues. Second, it is enriched in circulating HDLs and mediates their uptake by hepatocytes. APOE also plays an important role in lipid transport in the central nervous system, regulating neuron survival and sprouting. This Neomonachus schauinslandi (Hawaiian monk seal) protein is Apolipoprotein E (APOE).